We begin with the raw amino-acid sequence, 569 residues long: Laccase-6 (569 aa).

Positions 1 to 29 (MTSSAVPSLFRLSFLLFTLQVMNIGRIGA) are cleaved as a signal peptide. Plastocyanin-like domains are found at residues 37–153 (KVQT…PKAS) and 163–315 (NEHT…YIGA). Asn-83 carries N-linked (GlcNAc...) asparagine glycosylation. Positions 87, 89, 132, and 134 each coordinate Cu cation. N-linked (GlcNAc...) asparagine glycosylation is found at Asn-208, Asn-303, Asn-319, Asn-392, Asn-438, and Asn-444. One can recognise a Plastocyanin-like 3 domain in the interval 417 to 553 (DFPTTPEKAY…STMFIVKNGK (137 aa)). 8 residues coordinate Cu cation: His-472, His-475, His-477, His-532, Cys-533, His-534, His-538, and Met-543.

It belongs to the multicopper oxidase family. Cu cation is required as a cofactor. In terms of tissue distribution, predominantly expressed in the inflorescence stem, but not in siliques.

The protein resides in the secreted. It localises to the extracellular space. Its subcellular location is the apoplast. The enzyme catalyses 4 hydroquinone + O2 = 4 benzosemiquinone + 2 H2O. Lignin degradation and detoxification of lignin-derived products. In Arabidopsis thaliana (Mouse-ear cress), this protein is Laccase-6 (LAC6).